The sequence spans 339 residues: DNA-directed RNA polymerase subunit alpha (339 aa).

Residues 1 to 235 (MTIQKNWQEL…DQLNVFVNFE (235 aa)) form an alpha N-terminal domain (alpha-NTD) region. The tract at residues 251 to 339 (FNPAFLKKVD…ELAKRFEDHY (89 aa)) is alpha C-terminal domain (alpha-CTD).

This sequence belongs to the RNA polymerase alpha chain family. Homodimer. The RNAP catalytic core consists of 2 alpha, 1 beta, 1 beta' and 1 omega subunit. When a sigma factor is associated with the core the holoenzyme is formed, which can initiate transcription.

The enzyme catalyses RNA(n) + a ribonucleoside 5'-triphosphate = RNA(n+1) + diphosphate. DNA-dependent RNA polymerase catalyzes the transcription of DNA into RNA using the four ribonucleoside triphosphates as substrates. The polypeptide is DNA-directed RNA polymerase subunit alpha (Nitrobacter winogradskyi (strain ATCC 25391 / DSM 10237 / CIP 104748 / NCIMB 11846 / Nb-255)).